The chain runs to 118 residues: MARIAGINIPDHKHTVIALTAIFGIGKTRSQSICASTGIAENVKISELSEEQIDILRDAVAKFVVEGDLRREVTLSIKRLMDLGCYRGLRHRRGLPVRGQRTKTNARTRKGPRKPIKK.

The interval 94–118 (GLPVRGQRTKTNARTRKGPRKPIKK) is disordered.

Belongs to the universal ribosomal protein uS13 family. As to quaternary structure, part of the 30S ribosomal subunit. Forms a loose heterodimer with protein S19. Forms two bridges to the 50S subunit in the 70S ribosome.

Located at the top of the head of the 30S subunit, it contacts several helices of the 16S rRNA. In the 70S ribosome it contacts the 23S rRNA (bridge B1a) and protein L5 of the 50S subunit (bridge B1b), connecting the 2 subunits; these bridges are implicated in subunit movement. Contacts the tRNAs in the A and P-sites. This Erwinia tasmaniensis (strain DSM 17950 / CFBP 7177 / CIP 109463 / NCPPB 4357 / Et1/99) protein is Small ribosomal subunit protein uS13.